The following is a 133-amino-acid chain: Napin-1 (133 aa).

2 consecutive propeptides follow at residues 31–49 (PSWTLDGEFDFEDDMEKQG) and 131–133 (PSY).

It belongs to the 2S seed storage albumins family. In terms of assembly, the mature protein consists of a small and a large chain linked by disulfide bonds. Cotyledons and the axis.

Its function is as follows. The small, basic, water-soluble napins are one of the two major kinds of storage proteins synthesized in the seed during its maturation. In Brassica napus (Rape), this protein is Napin-1.